The sequence spans 224 residues: UPF0758 protein VP0184 (224 aa).

In terms of domain architecture, MPN spans 102–224 (ALTSPEQTKL…SVSFAERGWI (123 aa)). Residues His173, His175, and Asp186 each contribute to the Zn(2+) site. The JAMM motif signature appears at 173–186 (HNHPSGVAEPSQAD).

Belongs to the UPF0758 family.

The sequence is that of UPF0758 protein VP0184 from Vibrio parahaemolyticus serotype O3:K6 (strain RIMD 2210633).